Reading from the N-terminus, the 252-residue chain is tRNA pseudouridine synthase A (252 aa).

The Nucleophile role is filled by Asp-52. Residue Tyr-111 coordinates substrate.

Belongs to the tRNA pseudouridine synthase TruA family. Homodimer.

The enzyme catalyses uridine(38/39/40) in tRNA = pseudouridine(38/39/40) in tRNA. Formation of pseudouridine at positions 38, 39 and 40 in the anticodon stem and loop of transfer RNAs. The chain is tRNA pseudouridine synthase A from Parabacteroides distasonis (strain ATCC 8503 / DSM 20701 / CIP 104284 / JCM 5825 / NCTC 11152).